The following is a 422-amino-acid chain: L-cysteine:1D-myo-inositol 2-amino-2-deoxy-alpha-D-glucopyranoside ligase (422 aa).

A Zn(2+)-binding site is contributed by cysteine 43. L-cysteinyl-5'-AMP is bound by residues cysteine 43–threonine 46, threonine 58, and asparagine 81–threonine 83. The 'HIGH' region signature appears at isoleucine 45–histidine 55. Over residues alanine 185–leucine 200 the composition is skewed to basic and acidic residues. Positions alanine 185–valine 221 are disordered. Residues glutamate 186–proline 191 carry the 'ERGGDP' region motif. Tryptophan 227 contributes to the L-cysteinyl-5'-AMP binding site. Cysteine 231 provides a ligand contact to Zn(2+). Residue glycine 249–aspartate 251 participates in L-cysteinyl-5'-AMP binding. Histidine 256 contacts Zn(2+). L-cysteinyl-5'-AMP is bound at residue isoleucine 288. Positions lysine 294–serine 298 match the 'KMSKS' region motif.

This sequence belongs to the class-I aminoacyl-tRNA synthetase family. MshC subfamily. In terms of assembly, monomer. Requires Zn(2+) as cofactor.

It carries out the reaction 1D-myo-inositol 2-amino-2-deoxy-alpha-D-glucopyranoside + L-cysteine + ATP = 1D-myo-inositol 2-(L-cysteinylamino)-2-deoxy-alpha-D-glucopyranoside + AMP + diphosphate + H(+). Functionally, catalyzes the ATP-dependent condensation of GlcN-Ins and L-cysteine to form L-Cys-GlcN-Ins. The polypeptide is L-cysteine:1D-myo-inositol 2-amino-2-deoxy-alpha-D-glucopyranoside ligase (Geodermatophilus obscurus (strain ATCC 25078 / DSM 43160 / JCM 3152 / CCUG 61914 / KCC A-0152 / KCTC 9177 / NBRC 13315 / NRRL B-3577 / G-20)).